The following is a 201-amino-acid chain: Proteasome subunit beta 1 (201 aa).

Residue M1 is a propeptide, removed in mature form; by autocatalysis. T2 functions as the Nucleophile in the catalytic mechanism.

This sequence belongs to the peptidase T1B family. As to quaternary structure, the 20S proteasome core is composed of 14 alpha and 14 beta subunits that assemble into four stacked heptameric rings, resulting in a barrel-shaped structure. The two inner rings, each composed of seven catalytic beta subunits, are sandwiched by two outer rings, each composed of seven alpha subunits. The catalytic chamber with the active sites is on the inside of the barrel. Has a gated structure, the ends of the cylinder being occluded by the N-termini of the alpha-subunits. Is capped at one or both ends by the proteasome regulatory ATPase, PAN.

Its subcellular location is the cytoplasm. It catalyses the reaction Cleavage of peptide bonds with very broad specificity.. The formation of the proteasomal ATPase PAN-20S proteasome complex, via the docking of the C-termini of PAN into the intersubunit pockets in the alpha-rings, triggers opening of the gate for substrate entry. Interconversion between the open-gate and close-gate conformations leads to a dynamic regulation of the 20S proteasome proteolysis activity. Component of the proteasome core, a large protease complex with broad specificity involved in protein degradation. This is Proteasome subunit beta 1 from Pyrobaculum neutrophilum (strain DSM 2338 / JCM 9278 / NBRC 100436 / V24Sta) (Thermoproteus neutrophilus).